The primary structure comprises 837 residues: SLIT and NTRK-like protein 4 (837 aa).

The N-terminal stretch at 1-18 is a signal peptide; sequence MFLWLFLIVSALISSTNA. Residues 19 to 618 lie on the Extracellular side of the membrane; that stretch reads DSDISVEICN…SPPGGPVPLS (600 aa). 6 LRR repeats span residues 60-81, 84-105, 108-129, 132-153, 156-177, and 179-200; these read NFYH…TFVN, HAVS…AFLG, ALKQ…TFLG, NLEY…AFNK, KLKV…IFRF, and SLTH…GVLE. The N-linked (GlcNAc...) asparagine glycan is linked to Asn-81. One can recognise an LRRCT 1 domain in the interval 213–264; the sequence is NPWNCSCDLLPLKAWLENMPYNIYIGEAICETPSDLYGRLLKETNKQELCPM. Asn-325 carries N-linked (GlcNAc...) asparagine glycosylation. The LRRNT domain maps to 333 to 375; the sequence is QTRVPPLTPCPVPCFCKTHPSDLGLSVNCQEKNIQSMSELTPK. LRR repeat units lie at residues 378-399, 402-423, 426-447, 450-471, 474-495, and 497-518; these read NAKK…DFTE, GLDL…VFHN, NLRR…IFSG, NLQY…TFDS, NLQL…IFSG, and PLAR…GVLD. An N-linked (GlcNAc...) asparagine glycan is attached at Asn-423. Residues 531-582 enclose the LRRCT 2 domain; sequence NPWDCTCDLVALKLWLEKLNDGIVVKELKCETPVQFANIELKSLKNEILCPK. A helical membrane pass occupies residues 619-639; that stretch reads ILILSILVVLILTVFVAFCLL. The Cytoplasmic portion of the chain corresponds to 640 to 837; it reads VFVLRRNKKP…LEEQTALNKI (198 aa).

Belongs to the SLITRK family. In terms of assembly, interacts (via LRR 1 and 2 repeats) with PTPRD (via extracellular domain). In terms of tissue distribution, in the adult, significant expression is detected only in the brain. Broadly expressed in embryonic brain with highest expression in subventricular zone, subplate, cortical plate, pyramidal cell layer of hippocampus, thalamus and hypothalamus.

Its subcellular location is the membrane. The protein resides in the cell membrane. Functionally, it is involved in synaptogenesis and promotes synapse differentiation. Suppresses neurite outgrowth. The chain is SLIT and NTRK-like protein 4 (Slitrk4) from Mus musculus (Mouse).